Reading from the N-terminus, the 717-residue chain is Cell division cycle protein 27 homolog A (717 aa).

Positions 198–208 (TEHIPGENQQD) are enriched in polar residues. Disordered regions lie at residues 198–217 (TEHIPGENQQDLKIMQQPGD), 282–315 (LSAEAQEESGRRRSARIAARKKNPMSQSFGKDSH), and 342–374 (SKEATTSGQSVSDIGSSVDDEEKSNPSESSPDR). A compositionally biased stretch (basic residues) spans 293-304 (RRSARIAARKKN). The segment covering 342 to 356 (SKEATTSGQSVSDIG) has biased composition (polar residues). TPR repeat units follow at residues 421–454 (HWVLMQVGKAYFELQDYFNADSSFTLAHQKYPYA), 489–522 (PESWCAVGNCYSLRKDHDTALKMFQRAIQLNERF), 524–556 (YAHTLCGHEFAALEEFEDAERCYRKALGIDTRH), 557–590 (YNAWYGLGMTYLRQEKFEFAQHQFQLALQINPRS), 592–624 (VIMCYYGIALHESKRNDEALMMMEKAVLTDAKN), 625–658 (PLPKYYKAHILTSLGDYHKAQKVLEELKECAPQE), and 659–692 (SSVHASLGKIYNQLKQYDKAVLHFGIALDLSPSP).

Belongs to the APC3/CDC27 family. As to quaternary structure, the APC/C is composed of at least 10 subunits. Interacts with APC2 and APC10.

It is found in the nucleus. It participates in protein modification; protein ubiquitination. In terms of biological role, component of the anaphase promoting complex/cyclosome (APC/C), a cell cycle-regulated E3 ubiquitin-protein ligase complex that controls progression through mitosis and the G1 phase of the cell cycle. The APC/C complex controls several key steps in the cell cycle by mediating ubiquitination and subsequent degradation of target proteins such as cyclins. The APC/C complex is required for the female gametophyte development and is involved in several aspect of development by controlling cell division and cell elongation. Involved in the control of endoreduplication. Functionally redundant with CDC27B in the control of gametophyte development. The sequence is that of Cell division cycle protein 27 homolog A (CDC27A) from Arabidopsis thaliana (Mouse-ear cress).